A 143-amino-acid polypeptide reads, in one-letter code: Transcriptional regulator MraZ (143 aa).

SpoVT-AbrB domains follow at residues 5–47 (EYKH…PMHE) and 76–119 (ATEC…SSKR).

The protein belongs to the MraZ family. Forms oligomers.

It is found in the cytoplasm. Its subcellular location is the nucleoid. This Halothermothrix orenii (strain H 168 / OCM 544 / DSM 9562) protein is Transcriptional regulator MraZ.